A 208-amino-acid chain; its full sequence is Uracil phosphoribosyltransferase (208 aa).

Residues arginine 78, arginine 103, and 130–138 (DPMLATGGS) each bind 5-phospho-alpha-D-ribose 1-diphosphate. Uracil contacts are provided by residues isoleucine 193 and 198–200 (GDA). Aspartate 199 contributes to the 5-phospho-alpha-D-ribose 1-diphosphate binding site.

The protein belongs to the UPRTase family. Requires Mg(2+) as cofactor.

It carries out the reaction UMP + diphosphate = 5-phospho-alpha-D-ribose 1-diphosphate + uracil. It participates in pyrimidine metabolism; UMP biosynthesis via salvage pathway; UMP from uracil: step 1/1. Its activity is regulated as follows. Allosterically activated by GTP. In terms of biological role, catalyzes the conversion of uracil and 5-phospho-alpha-D-ribose 1-diphosphate (PRPP) to UMP and diphosphate. The protein is Uracil phosphoribosyltransferase of Neisseria meningitidis serogroup A / serotype 4A (strain DSM 15465 / Z2491).